The chain runs to 127 residues: Small ribosomal subunit protein bS16 (127 aa).

The tract at residues 80 to 127 (GLKKRPTRNNPHKGEPGKKAQERIAAAKQAAEEAAAAKTESAPISEEV) is disordered. Basic residues predominate over residues 81 to 90 (LKKRPTRNNP). Positions 91 to 101 (HKGEPGKKAQE) are enriched in basic and acidic residues. Over residues 102–121 (RIAAAKQAAEEAAAAKTESA) the composition is skewed to low complexity.

It belongs to the bacterial ribosomal protein bS16 family.

This Bartonella henselae (strain ATCC 49882 / DSM 28221 / CCUG 30454 / Houston 1) (Rochalimaea henselae) protein is Small ribosomal subunit protein bS16.